Consider the following 262-residue polypeptide: Ribosomal RNA small subunit methyltransferase A (262 aa).

Residues I18, G43, E65, D91, and N110 each contribute to the S-adenosyl-L-methionine site.

Belongs to the class I-like SAM-binding methyltransferase superfamily. rRNA adenine N(6)-methyltransferase family. RsmA subfamily.

It is found in the cytoplasm. It carries out the reaction adenosine(1518)/adenosine(1519) in 16S rRNA + 4 S-adenosyl-L-methionine = N(6)-dimethyladenosine(1518)/N(6)-dimethyladenosine(1519) in 16S rRNA + 4 S-adenosyl-L-homocysteine + 4 H(+). Functionally, specifically dimethylates two adjacent adenosines (A1518 and A1519) in the loop of a conserved hairpin near the 3'-end of 16S rRNA in the 30S particle. May play a critical role in biogenesis of 30S subunits. This chain is Ribosomal RNA small subunit methyltransferase A, found in Ehrlichia ruminantium (strain Gardel).